Reading from the N-terminus, the 50-residue chain is uncharacterized protein (50 aa).

This is an uncharacterized protein from Bacillus subtilis (strain 168).